Consider the following 298-residue polypeptide: GTPase Era (298 aa).

The region spanning 8–176 is the Era-type G domain; it reads HCGSVAVIGR…VRDVLALLPE (169 aa). The tract at residues 16–23 is G1; sequence GRPNVGKS. 16–23 is a GTP binding site; sequence GRPNVGKS. Residues 42-46 are G2; that stretch reads QTTRH. The tract at residues 63–66 is G3; sequence DTPG. GTP is bound by residues 63 to 67 and 125 to 128; these read DTPGL and NKID. The interval 125–128 is G4; sequence NKID. Positions 155–157 are G5; the sequence is ISA. In terms of domain architecture, KH type-2 spans 199 to 283; it reads VREQLMRQLG…FLETWVRVRE (85 aa).

This sequence belongs to the TRAFAC class TrmE-Era-EngA-EngB-Septin-like GTPase superfamily. Era GTPase family. In terms of assembly, monomer.

It is found in the cytoplasm. Its subcellular location is the cell inner membrane. Its function is as follows. An essential GTPase that binds both GDP and GTP, with rapid nucleotide exchange. Plays a role in 16S rRNA processing and 30S ribosomal subunit biogenesis and possibly also in cell cycle regulation and energy metabolism. In Stenotrophomonas maltophilia (strain R551-3), this protein is GTPase Era.